Reading from the N-terminus, the 212-residue chain is Pyridoxine/pyridoxamine 5'-phosphate oxidase (212 aa).

Residues R8–Y11 and K66 contribute to the substrate site. FMN-binding positions include R61–K66, F76–T77, R82, K83, and Q105. 3 residues coordinate substrate: Y123, R127, and S131. Residues Q140 to S141 and W185 each bind FMN. R191–H193 contributes to the substrate binding site. An FMN-binding site is contributed by R195.

Belongs to the pyridoxamine 5'-phosphate oxidase family. Homodimer. The cofactor is FMN.

The catalysed reaction is pyridoxamine 5'-phosphate + O2 + H2O = pyridoxal 5'-phosphate + H2O2 + NH4(+). It carries out the reaction pyridoxine 5'-phosphate + O2 = pyridoxal 5'-phosphate + H2O2. It functions in the pathway cofactor metabolism; pyridoxal 5'-phosphate salvage; pyridoxal 5'-phosphate from pyridoxamine 5'-phosphate: step 1/1. Its pathway is cofactor metabolism; pyridoxal 5'-phosphate salvage; pyridoxal 5'-phosphate from pyridoxine 5'-phosphate: step 1/1. Functionally, catalyzes the oxidation of either pyridoxine 5'-phosphate (PNP) or pyridoxamine 5'-phosphate (PMP) into pyridoxal 5'-phosphate (PLP). The sequence is that of Pyridoxine/pyridoxamine 5'-phosphate oxidase from Shewanella baltica (strain OS223).